The sequence spans 687 residues: Chloride channel protein ClC-Kb (687 aa).

Topologically, residues 1-50 (MEEIVGLREGSPRKPVPLQELWRPCPRIRRNIQGSLEWLKERLFRVGEDW) are cytoplasmic. The next 2 helical transmembrane spans lie at 51-82 (YFLVALGVLMALISYAMNFAIGRVVRAHKWLY) and 91-111 (LRYLSWTVYPVALLSFSSGFS). Positions 116-127 (PSSGGSGIPEVK) form an intramembrane region, helical. Residue S121 coordinates chloride. A run of 2 helical transmembrane segments spans residues 141–160 (IKNFGAKVVGLSCTLATGST) and 161–180 (IFLGKLGPFVHLSVMIAAYL). Residue N193 is glycosylated (N-linked (GlcNAc...) asparagine). The helical intramembrane region spans 203-224 (AGAAVGVATVFAAPISGVLFSI). A helical membrane pass occupies residues 236-255 (YWRGFFAATCGAFMFHLLAV). Ca(2+) contacts are provided by E259, E261, D278, and E281. Transmembrane regions (helical) follow at residues 282–310 (IFFFVALGAICGILSCGYNYCQRTSLFFL) and 325–342 (PLYSALAAVVLASITYPP). An intramembrane region (helical) is located at residues 349–360 (ASRLSMSEYLET). 2 consecutive transmembrane segments (helical) span residues 400–420 (GTLVFFLVMKFWMLILATTIP) and 421–440 (IPAGYFLPIFVYGAAIGRLF). Residue F426 coordinates chloride. An intramembrane region (helical) is located at residues 464–496 (GAYALAGAAAFSGAVTHTLSTALLAFEVSGQIV). Residues 500-520 (PVLMAVLAANAICQSYQPSFY) form a helical membrane-spanning segment. The Cytoplasmic segment spans residues 521–687 (DGTIIVKKLP…STLTNPPAPK (167 aa)). 2 consecutive CBS domains span residues 551–609 (MNCT…DSAS) and 626–687 (CPTQ…PAPK).

It belongs to the chloride channel (TC 2.A.49) family. CLCNKB subfamily. As to quaternary structure, homodimer. Interacts with BSND. In terms of processing, N-glycosylated. In terms of tissue distribution, expressed predominantly in the kidney. Expressed in all segments of the nephron examined, including the S2 segment and the glomerulus.

It is found in the basolateral cell membrane. It catalyses the reaction chloride(in) = chloride(out). The catalysed reaction is iodide(out) = iodide(in). It carries out the reaction nitrate(in) = nitrate(out). The enzyme catalyses bromide(in) = bromide(out). Functionally, anion-selective channel permeable to small monovalent anions with ion selectivity for chloride &gt; bromide &gt; nitrate &gt; iodide. Forms a homodimeric channel where each subunit has its own ion conduction pathway. May conduct double-barreled currents controlled by two types of gates, two fast gates that control each subunit independently and a slow common gate that opens and shuts off both subunits simultaneously. Assembles with the regulatory subunit BSND/Barttin for sorting at the basolateral plasma membrane domain and functional switch to the ion conducting state. CLCNKB:BSND channels display mostly a linear current-voltage relationship controlled by common gate. Mediates chloride conductance along nephron segments, namely the thick ascending limb of Henle's loop, convoluted tubule and the collecting duct, contributing to the maintenance of systemic acid-base and electrolyte homeostasis. Conducts chloride currents in the stria vascularis of the inner ear to establish the endocochlear potential necessary for normal hearing. This chain is Chloride channel protein ClC-Kb, found in Rattus norvegicus (Rat).